Reading from the N-terminus, the 1158-residue chain is Type IV pilus biogenesis factor PilY1 (1158 aa).

Residues 1 to 29 (MIHQITRAGKSLLAAGCTLSILFASDSYA) form the signal peptide. Positions 841, 843, 845, 847, and 849 each coordinate Ca(2+).

The protein belongs to the PilY1 family.

It localises to the fimbrium. Its subcellular location is the membrane. It is found in the cytoplasm. The protein localises to the cytosol. Functionally, involved in pilus assembly, twitching motility and adhesion to host cells. Primes type IV pili (T4P) assembly and is required for inclusion of minor pilins PilV, PilW and PilX to the surface pili. Stabilizes assembled pilus fibers likely by antagonizing retraction mediated by PilT. Calcium-binding and calcium release by PilY1 seem to be essential for twitching motility and for regulation of pilus retraction dynamics of PilT. Regulates surface-activated virulence possibly by acting as a surface-attachment mechanosensor. This chain is Type IV pilus biogenesis factor PilY1, found in Pseudomonas aeruginosa (strain UCBPP-PA14).